The following is a 644-amino-acid chain: Transcription factor btd (644 aa).

2 disordered regions span residues 16–65 (HQAQ…TQQQ) and 101–196 (APPS…AGSP). Low complexity-rich tracts occupy residues 101-119 (APPSLSGSSSGSSSGSSPL) and 140-196 (ASPN…AGSP). 3 consecutive C2H2-type zinc fingers follow at residues 333 to 357 (HICHIPGCERLYGKASHLKTHLRWH), 363 to 385 (FLCLTCGKRFSRSDELQRHGRTH), and 391 to 413 (YACPICSKKFSRSDHLSKHKKTH). Disordered stretches follow at residues 437 to 461 (LEKKEKKSGKPLTPPVEFKQEQPDT) and 478 to 537 (TSAG…SSSA). 2 stretches are compositionally biased toward low complexity: residues 499-508 (TTTTSSAAAS) and 521-537 (AIQPATTSASSSSSSSA).

The protein localises to the nucleus. Functionally, required for the development of the antennal, intercalary and mandibular segments of the head. In Drosophila melanogaster (Fruit fly), this protein is Transcription factor btd (btd).